Consider the following 1715-residue polypeptide: Neurexin-2 (1715 aa).

Positions 1–29 are cleaved as a signal peptide; the sequence is MALGSRWRPPPQLPPLLLLLALVAGVRGL. The Laminin G-like 1 domain occupies 30 to 206; sequence EFGGGPGQWA…LRGAAADPLC (177 aa). Over 30 to 1639 the chain is Extracellular; it reads EFGGGPGQWA…EVIRESSSTT (1610 aa). A glycan (N-linked (GlcNAc...) asparagine) is linked at N60. The 41-residue stretch at 202 to 242 folds into the EGF-like 1 domain; that stretch reads ADPLCAPARNPCANGGLCTVLAPGEVGCDCSHTGFGGKFCS. 3 disulfide bridges follow: C206/C219, C213/C229, and C231/C241. Laminin G-like domains lie at 289–486 and 493–686; these read VATF…SFRC and DPVT…APFC. Position 335 (D335) interacts with Ca(2+). A glycan (N-linked (GlcNAc...) asparagine) is linked at N338. Ca(2+) contacts are provided by L352 and M420. Intrachain disulfides connect C450–C486, C657–C686, C694–C705, C699–C714, and C716–C726. In terms of domain architecture, EGF-like 2 spans 690 to 727; sequence TLKQCASAPCRNGGICREGWNRFVCDCIGTGFLGRVCE. Laminin G-like domains lie at 732 to 907 and 921 to 1096; these read VLSY…ITYC and DPVT…ERGC. Residues D779 and L796 each contribute to the Ca(2+) site. N844 is a glycosylation site (N-linked (GlcNAc...) asparagine). R857 serves as a coordination point for Ca(2+). Cystine bridges form between C1068–C1096, C1103–C1114, C1108–C1123, and C1125–C1135. The region spanning 1099-1136 is the EGF-like 3 domain; sequence PSTTCTEESCANQGVCLQQWDGFTCDCTMTSYGGPVCN. Positions 1140-1348 constitute a Laminin G-like 6 domain; the sequence is TTYIFGKGGA…HLRLVGEGPS (209 aa). Positions 1192 and 1209 each coordinate Ca(2+). N-linked (GlcNAc...) asparagine glycosylation occurs at N1239. Residues I1291 and N1293 each coordinate Ca(2+). S1403 carries an O-linked (Xyl...) (heparan sulfate) serine glycan. 3 disordered regions span residues 1461–1511, 1529–1549, and 1583–1626; these read ATQD…LPPT, LLSP…ATGA, and LGPG…RGPP. The chain crosses the membrane as a helical span at residues 1640-1660; the sequence is GMVVGIVAAAALCILILLYAM. Residues 1661 to 1715 lie on the Cytoplasmic side of the membrane; it reads YKYRNRDEGSYQVDQSRNYISNSAQSNGAVVKEKAPAAPKTPSKAKKNKDKEYYV. Positions 1682–1715 are disordered; that stretch reads NSAQSNGAVVKEKAPAAPKTPSKAKKNKDKEYYV.

Belongs to the neurexin family. The laminin G-like domain 1 binds to NXPH1. Interacts with PATJ. Interacts with CBLN1, CBLN2 and, less avidly, with CBLN4. Specific isoforms bind neuroligins NLGN1, NLGN2 and NLGN3. Isoform 5c/alpha-2C binds to alpha-dystroglycan. Interacts (via Laminin G-like 1 domain) with IGSF21 (Ig-like 1 domain) in a trans-interaction manner. Interacts with CLSTN3. In terms of processing, O-glycosylated; contains heparan sulfate. Heparan sulfate attachment is required for synapse development by mediating interactions with neuroligins. In terms of tissue distribution, brain (neuronal synapse).

The protein resides in the presynaptic cell membrane. Neuronal cell surface protein that may be involved in cell recognition and cell adhesion. May mediate intracellular signaling. This chain is Neurexin-2 (Nrxn2), found in Rattus norvegicus (Rat).